The primary structure comprises 114 residues: Large ribosomal subunit protein bL20 (114 aa).

It belongs to the bacterial ribosomal protein bL20 family.

Functionally, binds directly to 23S ribosomal RNA and is necessary for the in vitro assembly process of the 50S ribosomal subunit. It is not involved in the protein synthesizing functions of that subunit. This is Large ribosomal subunit protein bL20 from Anaeromyxobacter sp. (strain Fw109-5).